Reading from the N-terminus, the 794-residue chain is MTDTQAAAERIAQLRTELDTHNYRYYVLDEPSIPDAEYDRLFRELQALETEYPQLLTPDSPTQRVSGTPASAFGEVRHEIPMLSLGNAFEEQDLLDFDRRVREGLADLLPGGDLLGGGAEVEYSCEPKLDGLAVSLLYERGQLVRGATRGDGSTGEDITSNVRTIRNVPLKLHGEGWPEILEVRGEVFMSKAGFEALNAKAVETGGKTFANPRNAAAGSLRQLDSKITASRPLEFCAYGFGQVSGTLPDTQVGILEAFRGWGIPISRELRLVKGAQACRDYYDDIGRRRDALAYEIDGVVFKVNRIAFQRELGFRAREPRWAIAHKFPAREELTELLGVEFQVGRTGAVTPVARLKPVQVAGVTVSNATLHNMDEVARLGLRIGDTVVIRRAGDVIPQVMQVVLERRPADAQAIEVPEHCPVCGSAVERTQLVKRSKGKESISEGAIYRCVGRLSCQAQLKQAIIHFVSRRAMDIDGLGDKIVEQLVDRGLVASPADLYTLTYEQVFELEGFAELSTNNLLAAIADSRKPSLARFIFALGIPDVGEETAKLLARSLGSLERIGKALPEVLTYLPDVGAEVAYEIHNFFADEHNRQVIAQLRDAEHGVQLQEEGEVAAEFAACASLAGFIDKLNIPFIAATGAEKLASRFGSLDGIIRADWLDLRQVERLPERAAKSLRDFFDEPANVQRALAIEAQLREFGMHWQSERKAVEGLPLAGQTWVLTGTLEAMSRDVAKDKLEGLGAKVAGSVSAKTHCVVAGPGAGSKLAKANELGVKVLDEDGLLKLFDEHGVAR.

NAD(+) is bound by residues 35 to 39, 84 to 85, and E126; these read DAEYD and SL. The active-site N6-AMP-lysine intermediate is the K128. R149, E186, K302, and K326 together coordinate NAD(+). Zn(2+)-binding residues include C420, C423, C450, and C456. The BRCT domain maps to 711 to 794; the sequence is VEGLPLAGQT…KLFDEHGVAR (84 aa).

Belongs to the NAD-dependent DNA ligase family. LigA subfamily. The cofactor is Mg(2+). Mn(2+) serves as cofactor.

The catalysed reaction is NAD(+) + (deoxyribonucleotide)n-3'-hydroxyl + 5'-phospho-(deoxyribonucleotide)m = (deoxyribonucleotide)n+m + AMP + beta-nicotinamide D-nucleotide.. Its function is as follows. DNA ligase that catalyzes the formation of phosphodiester linkages between 5'-phosphoryl and 3'-hydroxyl groups in double-stranded DNA using NAD as a coenzyme and as the energy source for the reaction. It is essential for DNA replication and repair of damaged DNA. The polypeptide is DNA ligase (Pseudomonas aeruginosa (strain UCBPP-PA14)).